The primary structure comprises 206 residues: MPKVIGLTGGIASGKSTVSELLSAHGFKIVDADIASRQAVEKGTKGLERVKESFGEQAIDENGEMNRAYVGEVVFNQPEKRLELNEIVHPIVREIMEKEKAQYLSEGYHVIMDIPLLFENNLQDTVDEVWLVYTSESIQIDRLMERNNISMEEAKARVYSQISIDKKRRMADHEIDNRDTKLELKQNLENLLLEEGYIESHSEDVL.

Residues Val-4–Asp-204 form the DPCK domain. Ala-12–Thr-17 contributes to the ATP binding site.

This sequence belongs to the CoaE family.

The protein localises to the cytoplasm. The catalysed reaction is 3'-dephospho-CoA + ATP = ADP + CoA + H(+). It participates in cofactor biosynthesis; coenzyme A biosynthesis; CoA from (R)-pantothenate: step 5/5. Functionally, catalyzes the phosphorylation of the 3'-hydroxyl group of dephosphocoenzyme A to form coenzyme A. The sequence is that of Dephospho-CoA kinase from Staphylococcus saprophyticus subsp. saprophyticus (strain ATCC 15305 / DSM 20229 / NCIMB 8711 / NCTC 7292 / S-41).